A 322-amino-acid chain; its full sequence is Ribose 1,5-bisphosphate isomerase (322 aa).

Residues 20–23 (RGAG) and Arg63 contribute to the substrate site. Cys133 functions as the Proton acceptor in the catalytic mechanism. 135–137 (SKA) serves as a coordination point for substrate. Residue Asp202 is the Proton donor of the active site. Substrate-binding positions include 212–213 (NK) and Lys238.

The protein belongs to the eIF-2B alpha/beta/delta subunits family. R15P isomerase subfamily. In terms of assembly, homohexamer; trimer of dimers.

It carries out the reaction alpha-D-ribose 1,5-bisphosphate = D-ribulose 1,5-bisphosphate. Its activity is regulated as follows. Is highly activated in the presence of AMP, with an increase of &gt;40-fold in activity levels. Among other nucleotides, isomerase activity is slightly increased in the presence of GMP, but CMP, UMP, TMP, and NAD(+) have no effect; therefore, AMP is likely the major activator of R15P isomerase in vivo. To a lesser extent, various compounds with an adenosyl moiety, such as dAMP, adenosine, or methylthioadenosine, can also act as activators. The regulation of this enzyme by AMP prevents excess degradation of intracellular AMP by the archaeal AMP degradation pathway. Its function is as follows. Catalyzes the isomerization of ribose 1,5-bisphosphate (R15P) to ribulose 1,5-bisphosphate (RuBP), the CO(2) acceptor and substrate for RubisCO. Only accepts the alpha-anomer of D-ribose 1,5-bisphosphate as substrate, being inactive on the beta-anomer. Displays a strict substrate specificity, since other phosphorylated sugars such as R5P, ribose, G16P, G6P, G1P, FBP, F6P, and PRPP, are not substrates. Functions in an archaeal AMP degradation pathway, together with AMP phosphorylase and RubisCO. This chain is Ribose 1,5-bisphosphate isomerase, found in Thermococcus kodakarensis (strain ATCC BAA-918 / JCM 12380 / KOD1) (Pyrococcus kodakaraensis (strain KOD1)).